A 241-amino-acid chain; its full sequence is Uridylate kinase (241 aa).

15–18 (KLSG) serves as a coordination point for ATP. The segment at 23-28 (GSEGFG) is involved in allosteric activation by GTP. Residue G57 participates in UMP binding. ATP is bound by residues G58 and R62. UMP contacts are provided by residues D77 and 138 to 145 (TGNPFCTT). ATP is bound by residues T165, Y171, and D174.

The protein belongs to the UMP kinase family. Homohexamer.

The protein resides in the cytoplasm. It catalyses the reaction UMP + ATP = UDP + ADP. It functions in the pathway pyrimidine metabolism; CTP biosynthesis via de novo pathway; UDP from UMP (UMPK route): step 1/1. Its activity is regulated as follows. Allosterically activated by GTP. Inhibited by UTP. Functionally, catalyzes the reversible phosphorylation of UMP to UDP. This chain is Uridylate kinase, found in Shewanella amazonensis (strain ATCC BAA-1098 / SB2B).